The sequence spans 442 residues: Protein UNUSUAL FLORAL ORGANS (442 aa).

Residues 1–85 (MDSTVFINNP…RFYSLLFSNT (85 aa)) form an interaction with SKP1A region. In terms of domain architecture, F-box spans 44–90 (GRIWSKLPPPLLDRVIAFLPPPAFFRTRCVCKRFYSLLFSNTFLETY).

In terms of assembly, part of a putative SCF (ASK/Cullin/F-box) ubiquitin ligase complex. Interacts with SKP1A/ASK1, SKP1B/ASK2 and ASK11.

It is found in the nucleus. It functions in the pathway protein modification; protein ubiquitination. In terms of biological role, component of SCF(ASK-cullin-F-box) E3 ubiquitin ligase complexes, which may mediate the ubiquitination and subsequent proteasomal degradation of target proteins. Considered as a meristem identity factor required for normal growth of the young floral meristem. Acts together with LEAFY to positively regulate the B class floral homeotic genes APETALA3 and PISTILLATA. In this way, operates as a region-specific regulator for petal and stamen development. Alternatively, may play a role as a negative regulator of the C class floral homeotic genes. Interacts together with the SKP1-like protein ASK1 to form a ubiquitin E3 ligase complex and could indirectly promote the ubiquitination and degradation of specific proteins controlling the floral primordia development like repressors of B class floral homeotic genes. The chain is Protein UNUSUAL FLORAL ORGANS (UFO) from Arabidopsis thaliana (Mouse-ear cress).